A 227-amino-acid chain; its full sequence is Claudin-15 (227 aa).

Position 1 (Met-1) is a topological domain, cytoplasmic. A helical membrane pass occupies residues 2 to 24 (SVAVETFGFFMSALGLLMLGLTL). At 25 to 74 (SNSYWRVSTVHGNVITTNTIFENLWYSCATDSLGVSNCWDFPSMLALSGY) the chain is on the extracellular side. A disulfide bond links Cys-52 and Cys-62. A helical membrane pass occupies residues 75-99 (VQGCRALMITAILLGFLGLFLGMVG). At 100–115 (LRCTNVGNMDLSKKAK) the chain is on the cytoplasmic side. Position 111 is a phosphoserine (Ser-111). Residues 116-140 (LLAIAGTLHILAGACGMVAISWYAV) form a helical membrane-spanning segment. The Extracellular portion of the chain corresponds to 141-159 (NITTDFFNPLYAGTKYELG). Residues 146–147 (FF) are important for the formation of tight-junction strand-like structures. A helical membrane pass occupies residues 160–182 (PALYLGWSASLLSILGGICVFST). The Cytoplasmic segment spans residues 183–227 (CCCSSKEEPATRAGLPYKPSTVVIPRATSDESDISFGKYGKNAYV). Ser-211, Ser-214, and Ser-217 each carry phosphoserine.

This sequence belongs to the claudin family. As to quaternary structure, can form homo- and heteropolymeric tight junction strands. Palmitoylated when heterogeneously expressed in S.frugiperda cells. As to expression, detected in duodenum, jejunum and ileum. Detected on intestinal villi and crypts (at protein level). Ubiquitous. Detected in small and large intestine, colon, jejunum, heart, kidney and lung.

Its subcellular location is the cell junction. It is found in the tight junction. The protein localises to the cell membrane. The enzyme catalyses Na(+)(in) = Na(+)(out). The catalysed reaction is K(+)(in) = K(+)(out). It catalyses the reaction Cs(+)(in) = Cs(+)(out). It carries out the reaction Rb(+)(in) = Rb(+)(out). The enzyme catalyses Li(+)(in) = Li(+)(out). The catalysed reaction is NH4(+)(in) = NH4(+)(out). It catalyses the reaction methylamine(out) = methylamine(in). It carries out the reaction H2O(in) = H2O(out). In terms of biological role, forms paracellular channels: polymerizes in tight junction strands with cation- and water-selective channels through the strands, conveying epithelial permeability in a process known as paracellular tight junction permeability. In intestinal epithelium, allows for sodium and water fluxes from the peritoneal side to the lumen of the intestine to regulate nutrient absorption and intestinal morphogenesis. This Mus musculus (Mouse) protein is Claudin-15.